A 475-amino-acid polypeptide reads, in one-letter code: MWHAISRTSRMSQSGCPSGLLADKNISSSATRVIVKTAGNQKDFMVADDISVRQFKEMLLAHFQCQMDQLVLVFMGCLLKDHDTLSQRGIMDGHTIYLVIKSKQGSRSLAHSFRDLPTNDPCHRDRNTKGNSSRVHQPTGMNQAPVELAHFVGSDAPKVHTQNLEVSHPECKAQMLENPSIQRLLSNMEFMWQFISEHLDTQQLMQQNPEVSRLLLDNSEILLQTLELARNLAMIQEIMQIQQPSQNLEYPLNPQPYLGLETMPGGNNALGQNYADINDQMLNSMQDPFGGNPFTALLAGQVLEQVQSSPPPPPPSQEQQDQLTQHPATRVIYNSSGGFSSNTSANDTLNKVNHTSKANTAMISTKGQSHICATRQPAWIPALPSIELTQQLQEEYKDATVSLSSSRQTLKGDLQLSDEQSSSQITGGMMQLLMNNPYLAAQIMLFTSMPQLSEQWRQQLPTFLQQTQISDLLSA.

The Ubiquitin-like domain occupies 31–105; the sequence is TRVIVKTAGN…IYLVIKSKQG (75 aa). Disordered stretches follow at residues 113–138 and 305–325; these read FRDL…VHQP and QVQS…QLTQ. The segment covering 129 to 138 has biased composition (polar residues); the sequence is KGNSSRVHQP.

The protein is Ubiquilin-like protein (UBQLNL) of Homo sapiens (Human).